Consider the following 399-residue polypeptide: MAEGDFKNDSTGCIGDSVEFTTFKKRTGKSLGNRRKKRGLSGWEPYFQEPELTAEEKLENETLYSRNIPLTVRMERFIQRYRSRRKWSDPTRIRLFTMYLDLGGVSTGQKQFTGGTDINNDAKAREVSAQTTTDYIEYDILDEYDIDFKWVAGVFLSSHILYNAGLTKEEDLQIACQIVRNFLLSVLHNNVAPEFEDNIRDACLLAEQAETELISNKRLSTKLPGRLQRALASIHVDNYKGLWDKSQSDRTSDSSVNFIESNNTKFMPNDELFEPDGISRFSTQQARDYIQRTLGPRYLTGKVVEQEYLTVKLVSKTLLNFSNQSLCKAVFIVWDPPGSKYSQDTNKERLEVILESDLLNNTVDGTHLEGSFTFLDNGLTILDTVLAVLPTFYEEVKDE.

In terms of assembly, component of the argonaute siRNA chaperone (ARC) complex composed of ago1, arb1 and arb2. Interacts with ago1.

It is found in the nucleus. Its subcellular location is the cytoplasm. Functionally, component of the argonaute siRNA chaperone (ARC) complex which is required for histone H3K9 methylation, heterochromatin assembly and siRNA generation. The ARC complex contains mostly double-stranded siRNA. Inhibits the release of the siRNA passenger strand from ago1 together with arb2. Inhibits the slicer activity of ago1. Required for swi6 localization to the centromeric repeats. This chain is Argonaute-binding protein 1 (arb1), found in Schizosaccharomyces pombe (strain 972 / ATCC 24843) (Fission yeast).